Consider the following 541-residue polypeptide: Chaperonin GroEL (541 aa).

ATP contacts are provided by residues 29–32 (TLGP), 86–90 (DGTTT), Gly-413, 478–480 (NAL), and Asp-494.

Belongs to the chaperonin (HSP60) family. Forms a cylinder of 14 subunits composed of two heptameric rings stacked back-to-back. Interacts with the co-chaperonin GroES.

It localises to the cytoplasm. The enzyme catalyses ATP + H2O + a folded polypeptide = ADP + phosphate + an unfolded polypeptide.. Together with its co-chaperonin GroES, plays an essential role in assisting protein folding. The GroEL-GroES system forms a nano-cage that allows encapsulation of the non-native substrate proteins and provides a physical environment optimized to promote and accelerate protein folding. This chain is Chaperonin GroEL, found in Lachnoclostridium phytofermentans (strain ATCC 700394 / DSM 18823 / ISDg) (Clostridium phytofermentans).